The following is a 339-amino-acid chain: RNA 3'-terminal phosphate cyclase (339 aa).

ATP is bound by residues Asp-109 and 286–290 (HLADQ). His-310 functions as the Tele-AMP-histidine intermediate in the catalytic mechanism.

Belongs to the RNA 3'-terminal cyclase family. Type 1 subfamily.

It is found in the cytoplasm. The catalysed reaction is a 3'-end 3'-phospho-ribonucleotide-RNA + ATP = a 3'-end 2',3'-cyclophospho-ribonucleotide-RNA + AMP + diphosphate. Functionally, catalyzes the conversion of 3'-phosphate to a 2',3'-cyclic phosphodiester at the end of RNA. The mechanism of action of the enzyme occurs in 3 steps: (A) adenylation of the enzyme by ATP; (B) transfer of adenylate to an RNA-N3'P to produce RNA-N3'PP5'A; (C) and attack of the adjacent 2'-hydroxyl on the 3'-phosphorus in the diester linkage to produce the cyclic end product. The biological role of this enzyme is unknown but it is likely to function in some aspects of cellular RNA processing. This chain is RNA 3'-terminal phosphate cyclase, found in Halobacterium salinarum (strain ATCC 29341 / DSM 671 / R1).